Here is a 283-residue protein sequence, read N- to C-terminus: Trafficking protein particle complex subunit 31 (283 aa).

Positions M1–P16 are enriched in polar residues. Disordered regions lie at residues M1–D20 and S126–E156. Positions S126 to N151 are enriched in low complexity.

This sequence belongs to the TRAPP small subunits family. BET3 subfamily. As to quaternary structure, part of the multisubunit TRAPP (transport protein particle) I complex composed of BET3, BET5, TRS20, TRS23, TRS31 and TRS33. Part of the multisubunit TRAPP (transport protein particle) II complex composed of BET3, BET5, TRS20, TRS23, TRS31, TRS33, TRS65, TRS85, TRS120 and TRS130. Part of the multisubunit TRAPP (transport protein particle) III complex composed of BET3, BET5, TRS20, TRS23, TRS31, TRS33 and TRS85.

It is found in the golgi apparatus. Its subcellular location is the cis-Golgi network. It localises to the endoplasmic reticulum. The protein resides in the preautophagosomal structure. Component of the TRAPP I, TRAPP II and TRAPP III complexes which act as guanine nucleotide exchange factors (GEF) for YPT1. TRAPP I plays a key role in the late stages of endoplasmic reticulum to Golgi traffic. TRAPP II plays a role in intra-Golgi transport. TRAPP III plays a role in autophagosome formation. This chain is Trafficking protein particle complex subunit 31 (TRS31), found in Saccharomyces cerevisiae (strain ATCC 204508 / S288c) (Baker's yeast).